Reading from the N-terminus, the 2226-residue chain is Rotatin (2226 aa).

Positions Glu-295–Asn-346 are disordered. The segment covering Pro-307–Arg-319 has biased composition (low complexity). Phosphoserine is present on Ser-311. Lys-813 carries the post-translational modification N6-acetyllysine.

It belongs to the rotatin family. In terms of assembly, interacts with PPP1R35; this interaction allows the mutual recruitment to the centriole.

Its subcellular location is the cytoplasm. It is found in the cytoskeleton. It localises to the cilium basal body. Functionally, involved in the genetic cascade that governs left-right specification. Required for correct asymmetric expression of NODAL, LEFTY and PITX2. The protein is Rotatin of Mus musculus (Mouse).